The sequence spans 377 residues: Dihydroorotate dehydrogenase (quinone) (377 aa).

Residues 68-72 (AGFDK) and Thr92 contribute to the FMN site. Lys72 is a substrate binding site. 117–121 (NRMGF) lines the substrate pocket. FMN-binding residues include Asn149 and Asn182. Asn182 contributes to the substrate binding site. The Nucleophile role is filled by Ser185. A substrate-binding site is contributed by Asn187. Residues Lys224 and Thr252 each coordinate FMN. 253-254 (NT) is a substrate binding site. Residues Gly278, Gly307, and 328–329 (YT) contribute to the FMN site.

The protein belongs to the dihydroorotate dehydrogenase family. Type 2 subfamily. In terms of assembly, monomer. It depends on FMN as a cofactor.

Its subcellular location is the cell membrane. It catalyses the reaction (S)-dihydroorotate + a quinone = orotate + a quinol. It participates in pyrimidine metabolism; UMP biosynthesis via de novo pathway; orotate from (S)-dihydroorotate (quinone route): step 1/1. In terms of biological role, catalyzes the conversion of dihydroorotate to orotate with quinone as electron acceptor. The sequence is that of Dihydroorotate dehydrogenase (quinone) from Thermobifida fusca (strain YX).